The chain runs to 119 residues: Large ribosomal subunit protein uL22 (119 aa).

The protein belongs to the universal ribosomal protein uL22 family. Part of the 50S ribosomal subunit.

Its function is as follows. This protein binds specifically to 23S rRNA; its binding is stimulated by other ribosomal proteins, e.g. L4, L17, and L20. It is important during the early stages of 50S assembly. It makes multiple contacts with different domains of the 23S rRNA in the assembled 50S subunit and ribosome. In terms of biological role, the globular domain of the protein is located near the polypeptide exit tunnel on the outside of the subunit, while an extended beta-hairpin is found that lines the wall of the exit tunnel in the center of the 70S ribosome. The protein is Large ribosomal subunit protein uL22 of Microcystis aeruginosa (strain NIES-843 / IAM M-2473).